We begin with the raw amino-acid sequence, 400 residues long: Jasmonate-induced oxygenase 1 (400 aa).

A Fe2OG dioxygenase domain is found at 248–349; sequence DVGACLRVNY…RVSLAFFYNP (102 aa). A jasmonate-binding site is contributed by Arg-254. Asn-256 and Tyr-258 together coordinate 2-oxoglutarate. The Fe cation site is built by His-273, Asp-275, and His-330. 2-oxoglutarate-binding residues include Arg-340 and Ser-342. 2 residues coordinate jasmonate: Arg-379 and Arg-383.

The protein belongs to the iron/ascorbate-dependent oxidoreductase family. L-ascorbate serves as cofactor. Requires Fe(2+) as cofactor.

It carries out the reaction jasmonate + 2-oxoglutarate + O2 = (1R,2R)-12-hydroxyjasmonate + succinate + CO2. Functionally, 2-oxoglutarate-dependent dioxygenase involved in the oxidation of jasmonate (JA), a stress-induced phytohormone synthesized in response to attack by pathogens and herbivores, which triggers the activation of defense responses via the JA-mediated signaling pathway. Converts JA to 12-hydroxyjasmonate (12OH-JA), an inactive form of JA. Prevents over-accumulation of JA and indirectly its bioactive form JA-Ile under stress response. Acts as a negative regulator of JA-mediated defense signaling, by contributing to 12OH-JA accumulation, which represses JA defense responses upon infection by the fungal pathogen Botrytis cinerea and the herbivorous caterpillar Mamestra brassicae. The polypeptide is Jasmonate-induced oxygenase 1 (Arabidopsis thaliana (Mouse-ear cress)).